We begin with the raw amino-acid sequence, 271 residues long: Meiotic drive suppressor wtf35 (271 aa).

Disordered stretches follow at residues 1–24 (MKNN…DHEI) and 54–75 (TVPE…ERRQ). Over residues 57–69 (EDSSTGPTETANP) the composition is skewed to polar residues. 4 helical membrane passes run 90–110 (LLIS…CVNP), 120–140 (AFSV…FCFF), 176–196 (WENM…VGSP), and 213–233 (SLAE…AETV).

This sequence belongs to the WTF family. In terms of assembly, homomer. Interacts with other proteins that exhibit high sequence similarity.

The protein localises to the spore membrane. It localises to the vacuole membrane. In terms of biological role, acts as a suppressor component of the dual wtf meiotic drive system, and can suppress but not confer meiotic drive by compatible poisons. Wtf meiotic drive systems promote unequal transmission of alleles from the parental zygote to progeny spores by encoding a poison and an antidote from the same locus; the poison is trans-acting and forms toxic aggregates in all spores within an ascus, wherease the antidote is spore-specific and targets aggregates for degradation by the vacuole. Meiotic drive by wtf systems therefore lead to poisoning of all progeny that do not inherit the dual poison/antidote allele, or express a compatible antidote. The polypeptide is Meiotic drive suppressor wtf35 (Schizosaccharomyces kambucha (Fission yeast)).